Reading from the N-terminus, the 406-residue chain is MNFPIERVRADFPLLSRQVNGQPLVYLDSAASAQKPQAVIDKELHFYRDGYAAVHRGIHSLSAEATQQMEAVRTQVADFIHAASAEEIIFVRGTTEAINLVANSYGRHFLAAGDSIIITEMEHHANIVPWQMLAQDLGVEIRVWPLTATGELKITALAALIDDTTRLLAVTQVSNVLGTVNPIKDIVAQAKAAGLVVLVDGAQAVMHQPVDVQALGCDFYVFSGHKLYGPSGIGILYGKSALLQQMPPWEGGGAMIKTVSLTQGTTFADAPWRFEAGSPNTAGIMGLGAAIDYVTELGLLPIQQYEQSLMHYALAQLSQIKSLTLYGPTERAGVIAFNLGQHHAYDVGSFLDQYGIAIRTGHHCAMPLMAFYQVPSMCRASLALYNTREDVDRLVAGLQRIEKLLG.

Lys-226 bears the N6-(pyridoxal phosphate)lysine mark. The Cysteine persulfide intermediate role is filled by Cys-364.

It belongs to the class-V pyridoxal-phosphate-dependent aminotransferase family. Csd subfamily. Homodimer. Interacts with SufE and the SufBCD complex composed of SufB, SufC and SufD. The interaction with SufE is required to mediate the direct transfer of the sulfur atom from the S-sulfanylcysteine. The cofactor is pyridoxal 5'-phosphate.

It localises to the cytoplasm. The catalysed reaction is (sulfur carrier)-H + L-cysteine = (sulfur carrier)-SH + L-alanine. It catalyses the reaction L-selenocysteine + AH2 = hydrogenselenide + L-alanine + A + H(+). It participates in cofactor biosynthesis; iron-sulfur cluster biosynthesis. Cysteine desulfurases mobilize the sulfur from L-cysteine to yield L-alanine, an essential step in sulfur metabolism for biosynthesis of a variety of sulfur-containing biomolecules. Component of the suf operon, which is activated and required under specific conditions such as oxidative stress and iron limitation. Acts as a potent selenocysteine lyase in vitro, that mobilizes selenium from L-selenocysteine. Selenocysteine lyase activity is however unsure in vivo. The chain is Cysteine desulfurase from Yersinia pseudotuberculosis serotype IB (strain PB1/+).